The chain runs to 285 residues: Tumor necrosis factor ligand superfamily member 13B (285 aa).

At 1-46 (MDDSTEREQSRLTSCLKKREEMKLKECVSILPRKESPSVRSSKDGK) the chain is on the cytoplasmic side. Residues 47 to 67 (LLAATLLLALLSCCLTVVSFY) form a helical; Signal-anchor for type II membrane protein membrane-spanning segment. The Extracellular segment spans residues 68-285 (QVAALQGDLA…VTFFGALKLL (218 aa)). Positions 114 to 138 (IFEPPAPGEGNSSQNSRNKRAVQGP) are disordered. Asn124 carries an N-linked (GlcNAc...) asparagine glycan. Residues 145 to 284 (DCLQLIADSE…DVTFFGALKL (140 aa)) enclose the THD domain. Cys232 and Cys245 are disulfide-bonded. An N-linked (GlcNAc...) (high mannose) asparagine glycan is attached at Asn242.

Belongs to the tumor necrosis factor family. As to quaternary structure, homotrimer. Isoform 2 heteromultimerizes with isoform 1, probably limiting the amount of functional isoform 1 on the cell surface. Isoform 3 is unlikely form trimers or bind to BAFF receptors. Post-translationally, the soluble form derives from the membrane form by proteolytic processing. Isoform 2 is not efficiently shed from the membrane unlike isoform 1. In terms of processing, N-glycosylated. In terms of tissue distribution, abundantly expressed in peripheral blood Leukocytes and is specifically expressed in monocytes and macrophages. Also found in the spleen, lymph node, bone marrow, T-cells and dendritic cells. A lower expression seen in placenta, heart, lung, fetal liver, thymus, and pancreas. Isoform 2 is expressed in many myeloid cell lines.

It is found in the cell membrane. The protein resides in the secreted. Its function is as follows. Cytokine that binds to TNFRSF13B/TACI and TNFRSF17/BCMA. TNFSF13/APRIL binds to the same 2 receptors. Together, they form a 2 ligands -2 receptors pathway involved in the stimulation of B- and T-cell function and the regulation of humoral immunity. A third B-cell specific BAFF-receptor (BAFFR/BR3) promotes the survival of mature B-cells and the B-cell response. Isoform 2 seems to inhibit isoform 1 secretion and bioactivity. In terms of biological role, acts as a transcription factor for its own parent gene, in association with NF-kappa-B p50 subunit, at least in autoimmune and proliferative B-cell diseases. The presence of Delta4BAFF is essential for soluble BAFF release by IFNG/IFN-gamma-stimulated monocytes and for B-cell survival. It can directly or indirectly regulate the differential expression of a large number of genes involved in the innate immune response and the regulation of apoptosis. This chain is Tumor necrosis factor ligand superfamily member 13B (TNFSF13B), found in Homo sapiens (Human).